The primary structure comprises 753 residues: Pumilio homolog 23 (753 aa).

Residues 1–84 (MVSVGSKSLP…SEFEHQNQFV (84 aa)) are disordered. Composition is skewed to basic and acidic residues over residues 23-38 (MGERGKSSNNHSERNK), 47-57 (GNRGFDVDSSK), and 73-84 (KHSEFEHQNQFV). Pumilio repeat units lie at residues 123 to 158 (ETRGREYEIATDYIISHVLQTLLEGCELDQLCSFIR), 159 to 198 (NSASVFPAIAMDRSGSHVAESALKSLATHLENPDAYSVIE), 206 to 244 (KVIVDNPLDMMCNCYGSHVLRRLLCLCKGVSLDSPELYG), 284 to 325 (GLLS…EIIP), 345 to 380 (NVAKEILESMKDNSFSHLVEVILEVAPESLYNEMFN), 381 to 418 (KVFKNSLFELSVDRCANFVIQALISHARDQEQMGIMWE), 526 to 563 (SMKAEYITETAKDSSGARVIEAFLASDAATKQKRRLII), and 564 to 599 (KLRGHFGELSLHTSGSFTVEKCFDACNLTLREAIAS). The region spanning 322-675 (EIIPLILRCN…DASEDAAQEI (354 aa)) is the PUM-HD domain. 3 stretches are compositionally biased toward basic and acidic residues: residues 677–688 (VKNTRKEIDHHP), 699–712 (HAKDKDEPFAGEKR), and 719–728 (KTSEATDKPK). The disordered stretch occupies residues 677-753 (VKNTRKEIDH…KNRHSNKMRI (77 aa)). Positions 744–753 (KNRHSNKMRI) are enriched in basic residues.

Its subcellular location is the nucleus. It localises to the nucleolus. Its function is as follows. Sequence-specific RNA-binding protein that regulates translation and mRNA stability by binding the 3'-UTR of target mRNAs. This Arabidopsis thaliana (Mouse-ear cress) protein is Pumilio homolog 23 (APUM23).